A 227-amino-acid polypeptide reads, in one-letter code: A-type potassium channel modulatory protein KCNIP1 (227 aa).

Residues 38–94 (LEMTMVCHRPEGLEQLEAQTNFTKRELQVLYRGFKNECPSGVVNEETFKQIYAQFFP) enclose the EF-hand 1; degenerate domain. EF-hand domains are found at residues 97 to 132 (DASTYAHYLFNAFDTTQTGSVKFEDFVTALSILLRG), 133 to 168 (TVHEKLRWTFNLYDINKDGYINKEEMMDIVKAIYDM), and 181 to 216 (TPRQHVDVFFQKMDKNKDGIVTLDEFLESCQEDDNI). Positions 146, 148, 150, 152, 157, 194, 196, 198, and 205 each coordinate Ca(2+). Positions 214-227 (DNIMRSLQLFQNVM) are interaction with KCND2.

The protein belongs to the recoverin family. In terms of assembly, component of heteromultimeric potassium channels. Identified in potassium channel complexes containing KCND1, KCND2, KCND3, KCNIP1, KCNIP2, KCNIP3, KCNIP4, DPP6 and DPP10. Part of a heterooctamer composed of the tetrameric channel and four KCNIP1 chains. Probably part of a complex consisting of KCNIP1, KCNIP2 isoform 3 and KCND2. Self-associates to form homodimers and homotetramers. Interacts with KCNIP2 isoform 3 in a calcium-dependent manner. Interacts with KCND2; this interaction mediates the capture of both the N- and C-terminus of KCND2, thus preventing KCND2 N-type inactivation and modulates the channel gating kinetics. Interacts with KCND3; each KCNIP1 monomer interacts with two adjacent KCND3 subunits, through both the N-terminal inactivation ball of a KCND3 subunit and a C-terminal helix from the adjacent KCND3 subunit, clamping them together; this interaction stabilizes the tetrameric form and modulates the channel gating kinetics namely channel activation and inactivation kinetics and rate of recovery from inactivation. In terms of tissue distribution, expressed in brain. Found in a subpopulation of neurons widely distributed and enriched in Purkinje cells of the cerebellum and in the reticular thalamic and medial habenular nuclei.

Its subcellular location is the cell membrane. The protein resides in the cytoplasm. It localises to the cell projection. It is found in the dendrite. Regulatory subunit of Kv4/D (Shal)-type voltage-gated rapidly inactivating A-type potassium channels. Regulates channel density, inactivation kinetics and rate of recovery from inactivation in a calcium-dependent and isoform-specific manner. Modulates KCND2/Kv4.2 currents. In vitro, modulates KCND1/Kv4.1 currents. Increases the presence of KCND2 at the cell surface. In Mus musculus (Mouse), this protein is A-type potassium channel modulatory protein KCNIP1.